Reading from the N-terminus, the 329-residue chain is Beta-ketoacyl-[acyl-carrier-protein] synthase III (329 aa).

Catalysis depends on residues C114 and H255. An ACP-binding region spans residues 256 to 260 (QANQR). N285 is an active-site residue.

Belongs to the thiolase-like superfamily. FabH family. As to quaternary structure, homodimer.

The protein resides in the cytoplasm. The catalysed reaction is malonyl-[ACP] + acetyl-CoA + H(+) = 3-oxobutanoyl-[ACP] + CO2 + CoA. The protein operates within lipid metabolism; fatty acid biosynthesis. Functionally, catalyzes the condensation reaction of fatty acid synthesis by the addition to an acyl acceptor of two carbons from malonyl-ACP. Catalyzes the first condensation reaction which initiates fatty acid synthesis and may therefore play a role in governing the total rate of fatty acid production. Possesses both acetoacetyl-ACP synthase and acetyl transacylase activities. Its substrate specificity determines the biosynthesis of branched-chain and/or straight-chain of fatty acids. The polypeptide is Beta-ketoacyl-[acyl-carrier-protein] synthase III (Thermosynechococcus vestitus (strain NIES-2133 / IAM M-273 / BP-1)).